We begin with the raw amino-acid sequence, 108 residues long: Heme oxygenase (staphylobilin-producing) (108 aa).

The ABM domain maps to 2–93; it reads FMAENRLQLQ…DDDGQQSPIL (92 aa). Position 6 (asparagine 6) interacts with Fe cation. Heme is bound by residues 21–28 and histidine 76; that span reads RFYNRQGI.

It belongs to the antibiotic biosynthesis monooxygenase family. Heme-degrading monooxygenase IsdG subfamily. Homodimer.

The protein localises to the cytoplasm. It catalyses the reaction heme b + 5 AH2 + 4 O2 + 2 H(+) = delta-staphylobilin + Fe(2+) + formaldehyde + 5 A + 4 H2O. The enzyme catalyses heme b + 5 AH2 + 4 O2 + 2 H(+) = beta-staphylobilin + Fe(2+) + formaldehyde + 5 A + 4 H2O. In terms of biological role, allows bacterial pathogens to use the host heme as an iron source. Catalyzes the oxidative degradation of the heme macrocyclic porphyrin ring to the oxo-bilirubin chromophore staphylobilin (a mixture of the linear tetrapyrroles 5-oxo-delta-bilirubin and 15-oxo-beta-bilirubin) in the presence of a suitable electron donor such as ascorbate or NADPH--cytochrome P450 reductase, with subsequent release of free iron. This is Heme oxygenase (staphylobilin-producing) (isdI) from Staphylococcus aureus (strain Mu3 / ATCC 700698).